The chain runs to 1112 residues: Phytochrome E (1112 aa).

The segment at 1–20 (MGFESSSSAASNMKPQPQKS) is disordered. Residues 217-387 (DIGALCDTVV…AFGLQLQMEL (171 aa)) enclose the GAF domain. Cys-322 contacts phytochromobilin. 2 PAS domains span residues 595–666 (FVCE…LQGE) and 732–803 (DYKT…LISL). One can recognise a Histidine kinase domain in the interval 877–1096 (YVRQEIKNPL…FFQVDLQVKT (220 aa)).

This sequence belongs to the phytochrome family. Homodimer. Post-translationally, contains one covalently linked phytochromobilin chromophore.

Its function is as follows. Regulatory photoreceptor which exists in two forms that are reversibly interconvertible by light: the Pr form that absorbs maximally in the red region of the spectrum and the Pfr form that absorbs maximally in the far-red region. Photoconversion of Pr to Pfr induces an array of morphogenic responses, whereas reconversion of Pfr to Pr cancels the induction of those responses. Pfr controls the expression of a number of nuclear genes including those encoding the small subunit of ribulose-bisphosphate carboxylase, chlorophyll A/B binding protein, protochlorophyllide reductase, rRNA, etc. It also controls the expression of its own gene(s) in a negative feedback fashion. The protein is Phytochrome E (PHYE) of Arabidopsis thaliana (Mouse-ear cress).